The following is a 167-amino-acid chain: UPF0114 protein in repA1-repA2 intergenic region (167 aa).

3 helical membrane passes run 15–35 (LMFPVYVGLSFGFILLTLKFF), 53–73 (LVLVVLSLIDIALVGGLLVMV), and 136–156 (IMLCVIIHLTFVLSAFGMAYI).

This sequence belongs to the UPF0114 family.

It is found in the cell membrane. The protein is UPF0114 protein in repA1-repA2 intergenic region of Buchnera aphidicola subsp. Diuraphis noxia.